An 852-amino-acid polypeptide reads, in one-letter code: Protein mono-ADP-ribosyltransferase PARP8 (852 aa).

Disordered regions lie at residues 113–134 (NGEE…NDSE) and 289–310 (SPSY…EQDG). The segment covering 123 to 134 (VEEDSEGDNDSE) has biased composition (acidic residues). An ADP-ribosylcysteine mark is found at C332, C366, C375, and C394. Residues 615 to 842 (EMTQAPYLEI…QEGGIHKEIL (228 aa)) enclose the PARP catalytic domain. A disordered region spans residues 748–775 (QKVSSKDEPASSSKSSNASQSQKKGQQS). Residues 757-775 (ASSSKSSNASQSQKKGQQS) show a composition bias toward low complexity.

It belongs to the ARTD/PARP family. Auto-mono-ADP-ribosylated.

The catalysed reaction is L-cysteinyl-[protein] + NAD(+) = S-(ADP-D-ribosyl)-L-cysteinyl-[protein] + nicotinamide + H(+). Its function is as follows. Mono-ADP-ribosyltransferase that mediates mono-ADP-ribosylation of target proteins. This chain is Protein mono-ADP-ribosyltransferase PARP8, found in Mus musculus (Mouse).